The primary structure comprises 1028 residues: Beta-galactosidase (1028 aa).

The substrate site is built by N104 and D203. D203 provides a ligand contact to Na(+). Mg(2+)-binding residues include E418, H420, and E463. Substrate is bound by residues E463 and 539-542; that span reads EYAH. The active-site Proton donor is the E463. E539 functions as the Nucleophile in the catalytic mechanism. N599 contributes to the Mg(2+) binding site. Na(+) is bound by residues F603 and N606. N606 and W1004 together coordinate substrate.

Belongs to the glycosyl hydrolase 2 family. In terms of assembly, homotetramer. The cofactor is Mg(2+). Requires Na(+) as cofactor.

It catalyses the reaction Hydrolysis of terminal non-reducing beta-D-galactose residues in beta-D-galactosides.. The chain is Beta-galactosidase from Enterobacter sp. (strain 638).